The primary structure comprises 291 residues: Small ribosomal subunit protein uS2 (291 aa).

The tract at residues 255–291 is disordered; it reads AGAATGEWSEAQGAQWETGTGAPAADWAAEPAKESSW.

Belongs to the universal ribosomal protein uS2 family. As to quaternary structure, component of the small ribosomal subunit. Mature ribosomes consist of a small (40S) and a large (60S) subunit. The 40S subunit contains about 33 different proteins and 1 molecule of RNA (18S). The 60S subunit contains about 49 different proteins and 3 molecules of RNA (25S, 5.8S and 5S). Interacts with RPS21.

It is found in the cytoplasm. Its function is as follows. Required for the assembly and/or stability of the 40S ribosomal subunit. Required for the processing of the 20S rRNA-precursor to mature 18S rRNA in a late step of the maturation of 40S ribosomal subunits. The sequence is that of Small ribosomal subunit protein uS2 from Podospora anserina (strain S / ATCC MYA-4624 / DSM 980 / FGSC 10383) (Pleurage anserina).